Consider the following 107-residue polypeptide: Nucleoid-associated protein RP866 (107 aa).

It belongs to the YbaB/EbfC family. As to quaternary structure, homodimer.

Its subcellular location is the cytoplasm. The protein resides in the nucleoid. In terms of biological role, binds to DNA and alters its conformation. May be involved in regulation of gene expression, nucleoid organization and DNA protection. The polypeptide is Nucleoid-associated protein RP866 (Rickettsia prowazekii (strain Madrid E)).